The sequence spans 284 residues: 2-dehydro-3-deoxyphosphooctonate aldolase (284 aa).

Belongs to the KdsA family.

It is found in the cytoplasm. The enzyme catalyses D-arabinose 5-phosphate + phosphoenolpyruvate + H2O = 3-deoxy-alpha-D-manno-2-octulosonate-8-phosphate + phosphate. It participates in carbohydrate biosynthesis; 3-deoxy-D-manno-octulosonate biosynthesis; 3-deoxy-D-manno-octulosonate from D-ribulose 5-phosphate: step 2/3. It functions in the pathway bacterial outer membrane biogenesis; lipopolysaccharide biosynthesis. The protein is 2-dehydro-3-deoxyphosphooctonate aldolase of Yersinia enterocolitica serotype O:8 / biotype 1B (strain NCTC 13174 / 8081).